The following is a 432-amino-acid chain: MAVAVGRPSNEELRNLSLSGHVGFDSLPDQLVNKSTSQGFCFNILCVGETGIGKSTLMDTLFNTKFESDPATHNEPGVRLKARSYELQESNVRLKLTIVDTVGFGDQINKDDSYKPIVEYIDAQFEAYLQEELKIKRSLFNYHDTRIHACLYFIAPTGHSLKSLDLVTTKKLDSKVNIIPIIAKADTIAKNELHKFKSKIMSELVSNGVQIYQFPTDEETVAEINATMSVHLPFAVVGSTEEVKIGNKMAKARQYPWGVVQVENENHCDFVKLREMLIRVNMEDLREQTHTRHYELYRRCKLEEMGFKDTDPDSKPFSLQETYEAKRNEFLGELQKKEEEMRQMFVMRVKEKEAELKEAEKELHEKFDLLKRTHQEEKKKVEDKKKELEEEVNNFQKKKAAVQLLQSQAQQSGAQQTKKDKDKKNSPWLCTE.

Ala2 is subject to N-acetylalanine. At Ser9 the chain carries Phosphoserine. A Septin-type G domain is found at 38-304 (QGFCFNILCV…ELYRRCKLEE (267 aa)). Residues 48–55 (GETGIGKS) are G1 motif. GTP-binding positions include 48 to 55 (GETGIGKS), Gly103, 184 to 192 (KADTIAKNE), Gly238, and Arg253. A G3 motif region spans residues 100 to 103 (DTVG). The G4 motif stretch occupies residues 183 to 186 (AKAD). The stretch at 320-413 (QETYEAKRNE…LLQSQAQQSG (94 aa)) forms a coiled coil. Over residues 403 to 416 (QLLQSQAQQSGAQQ) the composition is skewed to low complexity. The segment at 403–432 (QLLQSQAQQSGAQQTKKDKDKKNSPWLCTE) is disordered.

Belongs to the TRAFAC class TrmE-Era-EngA-EngB-Septin-like GTPase superfamily. Septin GTPase family. As to quaternary structure, septins polymerize into heterooligomeric protein complexes that form filaments, and can associate with cellular membranes, actin filaments and microtubules. Forms homooligomers. GTPase activity is required for filament formation. Interacts with SEPTIN7, SEPTIN9 and SEPTIN12.

The protein resides in the cytoplasm. It localises to the cytoskeleton. The protein localises to the synapse. It is found in the cell projection. Its subcellular location is the dendritic spine. The protein resides in the axon. In terms of biological role, filament-forming cytoskeletal GTPase. May play a role in cytokinesis (Potential). May play a role in the cytoarchitecture of neurons, including dendritic arborization and dendritic spines, and in GABAergic synaptic connectivity. The protein is Septin-11 of Macaca fascicularis (Crab-eating macaque).